We begin with the raw amino-acid sequence, 212 residues long: MAKQYDVLFRLLLIGDSGVGKTCLLCRFTDNEFHSSHISTIGVDFKMKTIEVDGIKVRIQIWDTAGQERYQTITKQYYRRAQGIFLVYDISSERSYQHIMKWVSDVDEYAPEGVQKILIGNKADEEQKRQVGREQGQQLAREYGMDFYETSACTNLNIKESFTRLTELVLQAHRKELEGLRTRANHELALAELEEDEGKPEGPANSSKTCWC.

GTP contacts are provided by S17, G18, V19, G20, K21, T22, C23, S35, S39, and T40. T22 lines the Mg(2+) pocket. 2 consecutive short sequence motifs (switch) follow at residues 31 to 45 (NEFH…GVDF) and 63 to 80 (DTAG…YYRR). Mg(2+)-binding residues include T40 and D63. Residues G66, N121, K122, D124, S151, and A152 each coordinate GTP. Positions 192-212 (ELEEDEGKPEGPANSSKTCWC) are disordered. 2 S-geranylgeranyl cysteine lipidation sites follow: C210 and C212. At C212 the chain carries Cysteine methyl ester.

Belongs to the small GTPase superfamily. Rab family. The GTP bound form of RAB15 interacts with REP15. Interacts (GTP-bound form) with MICAL1, MICAL3, MICALCL, EHBP1 and EHBP1L1. The cofactor is Mg(2+).

The protein resides in the cell membrane. The catalysed reaction is GTP + H2O = GDP + phosphate + H(+). Regulated by guanine nucleotide exchange factors (GEFs) which promote the exchange of bound GDP for free GTP. Regulated by GTPase activating proteins (GAPs) which increase the GTP hydrolysis activity. Inhibited by GDP dissociation inhibitors (GDIs). Functionally, the small GTPases Rab are key regulators of intracellular membrane trafficking, from the formation of transport vesicles to their fusion with membranes. Rabs cycle between an inactive GDP-bound form and an active GTP-bound form that is able to recruit to membranes different sets of downstream effectors directly responsible for vesicle formation, movement, tethering and fusion. RAB15 may act in concert with RAB3A in regulating aspects of synaptic vesicle membrane flow within the nerve terminal. This chain is Ras-related protein Rab-15 (RAB15), found in Bos taurus (Bovine).